We begin with the raw amino-acid sequence, 341 residues long: Fructose-1,6-bisphosphatase, cytosolic (341 aa).

Residues Glu71, Glu100, Asp121, Leu123, and Asp124 each contribute to the Mg(2+) site. Substrate-binding positions include 124–127 (DGCS), Asn215, Tyr247, Tyr267, and Lys277. A Mg(2+)-binding site is contributed by Glu283.

Belongs to the FBPase class 1 family. Requires Mg(2+) as cofactor.

The protein resides in the cytoplasm. The enzyme catalyses beta-D-fructose 1,6-bisphosphate + H2O = beta-D-fructose 6-phosphate + phosphate. In Beta vulgaris (Sugar beet), this protein is Fructose-1,6-bisphosphatase, cytosolic.